We begin with the raw amino-acid sequence, 686 residues long: Homoaconitase, mitochondrial (686 aa).

A mitochondrion-targeting transit peptide spans 1 to 17 (MRVVRCVRRFSASRAVS). Cys337, Cys401, and Cys404 together coordinate [4Fe-4S] cluster.

Belongs to the aconitase/IPM isomerase family. [4Fe-4S] cluster is required as a cofactor.

The protein localises to the mitochondrion. It catalyses the reaction (2R,3S)-homoisocitrate = cis-homoaconitate + H2O. The protein operates within amino-acid biosynthesis; L-lysine biosynthesis via AAA pathway; L-alpha-aminoadipate from 2-oxoglutarate: step 3/5. Its function is as follows. Catalyzes the reversible hydration of cis-homoaconitate to (2R,3S)-homoisocitrate, a step in the alpha-aminoadipate pathway for lysine biosynthesis. The chain is Homoaconitase, mitochondrial (LYS4) from Eremothecium gossypii (strain ATCC 10895 / CBS 109.51 / FGSC 9923 / NRRL Y-1056) (Yeast).